A 326-amino-acid chain; its full sequence is Beta-ketoacyl-[acyl-carrier-protein] synthase III 2 (326 aa).

Residues Cys-114 and His-251 contribute to the active site. An ACP-binding region spans residues 252-256 (SANAR). The active site involves Asn-281.

The protein belongs to the thiolase-like superfamily. FabH family. In terms of assembly, homodimer.

Its subcellular location is the cytoplasm. The enzyme catalyses malonyl-[ACP] + acetyl-CoA + H(+) = 3-oxobutanoyl-[ACP] + CO2 + CoA. It functions in the pathway lipid metabolism; fatty acid biosynthesis. Its function is as follows. Catalyzes the condensation reaction of fatty acid synthesis by the addition to an acyl acceptor of two carbons from malonyl-ACP. Catalyzes the first condensation reaction which initiates fatty acid synthesis and may therefore play a role in governing the total rate of fatty acid production. Possesses both acetoacetyl-ACP synthase and acetyl transacylase activities. Its substrate specificity determines the biosynthesis of branched-chain and/or straight-chain of fatty acids. The protein is Beta-ketoacyl-[acyl-carrier-protein] synthase III 2 of Staphylococcus epidermidis (strain ATCC 12228 / FDA PCI 1200).